The chain runs to 679 residues: Recombination repair protein 1 (679 aa).

The disordered stretch occupies residues Met1–Lys407. The span at Ala45–Thr55 shows a compositional bias: basic residues. Residues Ala106 to Val116 are compositionally biased toward basic and acidic residues. Residues Thr133 and Thr140 each carry the phosphothreonine modification. A Phosphoserine modification is found at Ser142. Composition is skewed to basic and acidic residues over residues Glu179–Ala189 and Ser203–Ala214. Ser258 bears the Phosphoserine mark. Residues Lys312–Pro347 show a composition bias toward basic and acidic residues. The AP endonuclease stretch occupies residues Lys428 to Ile679. Glu461 is a Mg(2+) binding site. Residue Tyr533 is part of the active site. The Mg(2+) site is built by Asp572, Asn574, and Asp669. Asp572 (proton donor/acceptor) is an active-site residue.

This sequence belongs to the DNA repair enzymes AP/ExoA family. In terms of assembly, interacts with the zeta DNA polymerase complex; interacts (via the N-terminus) with the accessory subunit PolZ2/Rev7 and also interacts with the catalytic component PolZ1, however the interaction with PolZ1 is likely via PolZ2. Requires Mg(2+) as cofactor. Mn(2+) serves as cofactor.

It localises to the nucleus. The enzyme catalyses Exonucleolytic cleavage in the 3'- to 5'-direction to yield nucleoside 5'-phosphates.. In terms of biological role, plays a role in the cellular response to oxidative stress by promoting DNA repair mechanisms such as base excision repair and possibly homologous recombination repair. Functions as an apurinic/apyrimidinic (AP) endodeoxyribonuclease in the DNA base excision repair (BER) pathway of DNA lesions induced by oxidative and alkylating agents. Likely to initiate repair of AP sites in DNA by catalyzing hydrolytic incision of the phosphodiester backbone immediately adjacent to the damage, generating a single-strand break with 5'-deoxyribose phosphate and 3'-hydroxyl ends. Has a 3'-5' exoribonuclease activity on mismatched deoxyribonucleotides at the 3' termini of nicked or gapped DNA molecules during short-patch BER. Has apurinic endonuclease and double-stranded DNA 3'-exonuclease activities and carries out single-stranded DNA renaturation in a Mg(2+)-dependent manner. Activity is more efficient in purine-rich regions of dsDNA than in pyrimidine-rich regions. This is Recombination repair protein 1 from Drosophila melanogaster (Fruit fly).